Reading from the N-terminus, the 131-residue chain is D-ribose pyranase (131 aa).

Histidine 20 serves as the catalytic Proton donor. Residues aspartate 28, histidine 98, and 120–122 (YSN) each bind substrate.

This sequence belongs to the RbsD / FucU family. RbsD subfamily. Homodecamer.

It is found in the cytoplasm. It carries out the reaction beta-D-ribopyranose = beta-D-ribofuranose. The protein operates within carbohydrate metabolism; D-ribose degradation; D-ribose 5-phosphate from beta-D-ribopyranose: step 1/2. In terms of biological role, catalyzes the interconversion of beta-pyran and beta-furan forms of D-ribose. This chain is D-ribose pyranase, found in Pediococcus pentosaceus (strain ATCC 25745 / CCUG 21536 / LMG 10740 / 183-1w).